Consider the following 161-residue polypeptide: ATP synthase subunit b 1 (161 aa).

Residues 5-25 (EFWVAVAFVIFCGIVWKAGGF) traverse the membrane as a helical segment.

This sequence belongs to the ATPase B chain family. As to quaternary structure, F-type ATPases have 2 components, F(1) - the catalytic core - and F(0) - the membrane proton channel. F(1) has five subunits: alpha(3), beta(3), gamma(1), delta(1), epsilon(1). F(0) has three main subunits: a(1), b(2) and c(10-14). The alpha and beta chains form an alternating ring which encloses part of the gamma chain. F(1) is attached to F(0) by a central stalk formed by the gamma and epsilon chains, while a peripheral stalk is formed by the delta and b chains.

It localises to the cell inner membrane. Functionally, f(1)F(0) ATP synthase produces ATP from ADP in the presence of a proton or sodium gradient. F-type ATPases consist of two structural domains, F(1) containing the extramembraneous catalytic core and F(0) containing the membrane proton channel, linked together by a central stalk and a peripheral stalk. During catalysis, ATP synthesis in the catalytic domain of F(1) is coupled via a rotary mechanism of the central stalk subunits to proton translocation. Component of the F(0) channel, it forms part of the peripheral stalk, linking F(1) to F(0). The protein is ATP synthase subunit b 1 of Methylobacterium sp. (strain 4-46).